The sequence spans 743 residues: Peptide transporter family 1 (743 aa).

The tract at residues 1 to 28 is disordered; the sequence is MASEITNGKNGQNGKNGQKEESDSQIAP. Low complexity predominate over residues 7 to 16; that stretch reads NGKNGQNGKN. The next 10 helical transmembrane spans lie at 74-94, 104-124, 132-152, 173-193, 207-227, 334-354, 364-384, 597-619, 629-649, and 659-679; these read VLFHTFTMLVYIFPLIGALIA, ILYLSLVYSLGAMVVSFGAVP, AVTVVGLLLIAIGTGGIKPCV, FSLFYFAINAGSLISTTFTPI, FSLAFGVPAILMIFSVIIFMA, VVNPLLILGFLPLFDYIIYPA, LQKLTLGLLLAALGFFLSAGL, LPQIVVMTAAEVMFSVTGLEFSY, VLQACWLLSVAIGNMLVVVIA, and GEFTLFASLMLVDMMIFLWLA.

This sequence belongs to the major facilitator superfamily. Proton-dependent oligopeptide transporter (POT/PTR) (TC 2.A.17) family. Expressed in thorax and abdomen of females: apical epithelial membranes of midgut, rectum, and reproductive tract. Also expressed in neuropil of the central nervous system, with elevated expression within the alpha- and beta-lobes of the mushroom bodies.

It localises to the membrane. Important role in absorption of dietary peptides. High-affinity transporter of alanylalanine. Dipeptide transport activity is proton dependent. The protein is Peptide transporter family 1 (yin) of Drosophila melanogaster (Fruit fly).